The primary structure comprises 564 residues: CTP synthase (564 aa).

The segment at Met-1–Ile-265 is amidoligase domain. A CTP-binding site is contributed by Ser-13. Ser-13 serves as a coordination point for UTP. ATP-binding positions include Ser-14–Ile-19 and Asp-71. Mg(2+) contacts are provided by Asp-71 and Glu-139. CTP-binding positions include Asp-146–Glu-148, Lys-186–Gln-191, and Lys-222. Residues Lys-186–Gln-191 and Lys-222 each bind UTP. The Glutamine amidotransferase type-1 domain occupies Ser-290–Lys-543. Gly-351 provides a ligand contact to L-glutamine. Cys-378 functions as the Nucleophile; for glutamine hydrolysis in the catalytic mechanism. Residues Leu-379–Gln-382, Glu-402, and Arg-469 contribute to the L-glutamine site. Active-site residues include His-516 and Glu-518.

Belongs to the CTP synthase family. In terms of assembly, homotetramer.

It catalyses the reaction UTP + L-glutamine + ATP + H2O = CTP + L-glutamate + ADP + phosphate + 2 H(+). It carries out the reaction L-glutamine + H2O = L-glutamate + NH4(+). The enzyme catalyses UTP + NH4(+) + ATP = CTP + ADP + phosphate + 2 H(+). The protein operates within pyrimidine metabolism; CTP biosynthesis via de novo pathway; CTP from UDP: step 2/2. Allosterically activated by GTP, when glutamine is the substrate; GTP has no effect on the reaction when ammonia is the substrate. The allosteric effector GTP functions by stabilizing the protein conformation that binds the tetrahedral intermediate(s) formed during glutamine hydrolysis. Inhibited by the product CTP, via allosteric rather than competitive inhibition. Catalyzes the ATP-dependent amination of UTP to CTP with either L-glutamine or ammonia as the source of nitrogen. Regulates intracellular CTP levels through interactions with the four ribonucleotide triphosphates. In Nitrosomonas eutropha (strain DSM 101675 / C91 / Nm57), this protein is CTP synthase.